Reading from the N-terminus, the 428-residue chain is 3-phosphoshikimate 1-carboxyvinyltransferase (428 aa).

3 residues coordinate 3-phosphoshikimate: Lys21, Ser22, and Arg26. Lys21 contributes to the phosphoenolpyruvate binding site. 2 residues coordinate phosphoenolpyruvate: Gly91 and Arg119. Positions 164, 166, 313, and 340 each coordinate 3-phosphoshikimate. Gln166 contacts phosphoenolpyruvate. Asp313 serves as the catalytic Proton acceptor. 2 residues coordinate phosphoenolpyruvate: Arg344 and Arg386.

It belongs to the EPSP synthase family. Monomer.

Its subcellular location is the cytoplasm. It carries out the reaction 3-phosphoshikimate + phosphoenolpyruvate = 5-O-(1-carboxyvinyl)-3-phosphoshikimate + phosphate. It functions in the pathway metabolic intermediate biosynthesis; chorismate biosynthesis; chorismate from D-erythrose 4-phosphate and phosphoenolpyruvate: step 6/7. Catalyzes the transfer of the enolpyruvyl moiety of phosphoenolpyruvate (PEP) to the 5-hydroxyl of shikimate-3-phosphate (S3P) to produce enolpyruvyl shikimate-3-phosphate and inorganic phosphate. The sequence is that of 3-phosphoshikimate 1-carboxyvinyltransferase from Campylobacter jejuni subsp. jejuni serotype O:6 (strain 81116 / NCTC 11828).